The chain runs to 424 residues: Serine--tRNA ligase (424 aa).

231–233 (TAE) provides a ligand contact to L-serine. 262 to 264 (RSE) contacts ATP. Residue E285 participates in L-serine binding. Residue 349 to 352 (EISS) coordinates ATP. L-serine is bound at residue S385.

The protein belongs to the class-II aminoacyl-tRNA synthetase family. Type-1 seryl-tRNA synthetase subfamily. As to quaternary structure, homodimer. The tRNA molecule binds across the dimer.

Its subcellular location is the cytoplasm. The catalysed reaction is tRNA(Ser) + L-serine + ATP = L-seryl-tRNA(Ser) + AMP + diphosphate + H(+). It catalyses the reaction tRNA(Sec) + L-serine + ATP = L-seryl-tRNA(Sec) + AMP + diphosphate + H(+). Its pathway is aminoacyl-tRNA biosynthesis; selenocysteinyl-tRNA(Sec) biosynthesis; L-seryl-tRNA(Sec) from L-serine and tRNA(Sec): step 1/1. Its function is as follows. Catalyzes the attachment of serine to tRNA(Ser). Is also able to aminoacylate tRNA(Sec) with serine, to form the misacylated tRNA L-seryl-tRNA(Sec), which will be further converted into selenocysteinyl-tRNA(Sec). This chain is Serine--tRNA ligase, found in Bacillus pumilus (strain SAFR-032).